We begin with the raw amino-acid sequence, 440 residues long: Enolase (440 aa).

Gln163 is a (2R)-2-phosphoglycerate binding site. The active-site Proton donor is Glu205. 3 residues coordinate Mg(2+): Asp242, Glu288, and Asp315. (2R)-2-phosphoglycerate is bound by residues Lys340, Arg369, Ser370, and Lys391. The Proton acceptor role is filled by Lys340.

The protein belongs to the enolase family. Mg(2+) serves as cofactor.

The protein resides in the cytoplasm. It is found in the secreted. The protein localises to the cell surface. It carries out the reaction (2R)-2-phosphoglycerate = phosphoenolpyruvate + H2O. The protein operates within carbohydrate degradation; glycolysis; pyruvate from D-glyceraldehyde 3-phosphate: step 4/5. Its function is as follows. Catalyzes the reversible conversion of 2-phosphoglycerate (2-PG) into phosphoenolpyruvate (PEP). It is essential for the degradation of carbohydrates via glycolysis. This chain is Enolase, found in Pediococcus pentosaceus (strain ATCC 25745 / CCUG 21536 / LMG 10740 / 183-1w).